Consider the following 149-residue polypeptide: Transcriptional repressor NrdR (149 aa).

A zinc finger lies at Cys3 to Cys34. Positions Ile49–Thr139 constitute an ATP-cone domain.

It belongs to the NrdR family. Zn(2+) is required as a cofactor.

Negatively regulates transcription of bacterial ribonucleotide reductase nrd genes and operons by binding to NrdR-boxes. In Clostridium perfringens (strain ATCC 13124 / DSM 756 / JCM 1290 / NCIMB 6125 / NCTC 8237 / Type A), this protein is Transcriptional repressor NrdR.